The following is a 136-amino-acid chain: Large ribosomal subunit protein uL16 (136 aa).

It belongs to the universal ribosomal protein uL16 family. As to quaternary structure, part of the 50S ribosomal subunit.

In terms of biological role, binds 23S rRNA and is also seen to make contacts with the A and possibly P site tRNAs. The protein is Large ribosomal subunit protein uL16 of Buchnera aphidicola subsp. Baizongia pistaciae (strain Bp).